Consider the following 361-residue polypeptide: 3-dehydroquinate synthase (361 aa).

NAD(+)-binding positions include 69–74, 103–107, 127–128, K140, K149, and 167–170; these read DGEEYK, GVIGD, TT, and TLDT. Zn(2+) is bound by residues E182, H245, and H262.

Belongs to the sugar phosphate cyclases superfamily. Dehydroquinate synthase family. Co(2+) is required as a cofactor. The cofactor is Zn(2+). NAD(+) serves as cofactor.

The protein resides in the cytoplasm. The enzyme catalyses 7-phospho-2-dehydro-3-deoxy-D-arabino-heptonate = 3-dehydroquinate + phosphate. It functions in the pathway metabolic intermediate biosynthesis; chorismate biosynthesis; chorismate from D-erythrose 4-phosphate and phosphoenolpyruvate: step 2/7. Its function is as follows. Catalyzes the conversion of 3-deoxy-D-arabino-heptulosonate 7-phosphate (DAHP) to dehydroquinate (DHQ). The polypeptide is 3-dehydroquinate synthase (Thioalkalivibrio sulfidiphilus (strain HL-EbGR7)).